Reading from the N-terminus, the 616-residue chain is Glycoprotein Q1 (616 aa).

Residues 1–24 (MRPPRRSAPILVCAISMATALSNA) form the signal peptide. N-linked (GlcNAc...) asparagine; by host glycans are attached at residues asparagine 23, asparagine 44, asparagine 282, asparagine 330, and asparagine 351.

As to quaternary structure, interacts with isoform gQ2. The heterodimer gQ1-gQ2 associates with the glycoprotein complex gH-gL to form a tetrameric complex. The gH/gL/gQ1/gQ2 complex binds to host TNFRSF4. Post-translationally, glycosylated by host.

Its subcellular location is the virion. It is found in the host endoplasmic reticulum lumen. In terms of biological role, plays a role in virus entry by participating in host receptor binding at the cell surface. The sequence is that of Glycoprotein Q1 from Homo sapiens (Human).